Consider the following 196-residue polypeptide: ATP-dependent Clp protease proteolytic subunit (196 aa).

Serine 98 acts as the Nucleophile in catalysis. Histidine 123 is an active-site residue.

The protein belongs to the peptidase S14 family. As to quaternary structure, fourteen ClpP subunits assemble into 2 heptameric rings which stack back to back to give a disk-like structure with a central cavity, resembling the structure of eukaryotic proteasomes.

It is found in the cytoplasm. It catalyses the reaction Hydrolysis of proteins to small peptides in the presence of ATP and magnesium. alpha-casein is the usual test substrate. In the absence of ATP, only oligopeptides shorter than five residues are hydrolyzed (such as succinyl-Leu-Tyr-|-NHMec, and Leu-Tyr-Leu-|-Tyr-Trp, in which cleavage of the -Tyr-|-Leu- and -Tyr-|-Trp bonds also occurs).. Functionally, cleaves peptides in various proteins in a process that requires ATP hydrolysis. Has a chymotrypsin-like activity. Plays a major role in the degradation of misfolded proteins. The protein is ATP-dependent Clp protease proteolytic subunit of Lactiplantibacillus plantarum (strain ATCC BAA-793 / NCIMB 8826 / WCFS1) (Lactobacillus plantarum).